A 207-amino-acid chain; its full sequence is Urease accessory protein UreG (207 aa).

14-21 provides a ligand contact to GTP; that stretch reads GPVGSGKT.

This sequence belongs to the SIMIBI class G3E GTPase family. UreG subfamily. As to quaternary structure, homodimer. UreD, UreF and UreG form a complex that acts as a GTP-hydrolysis-dependent molecular chaperone, activating the urease apoprotein by helping to assemble the nickel containing metallocenter of UreC. The UreE protein probably delivers the nickel.

The protein localises to the cytoplasm. Its function is as follows. Facilitates the functional incorporation of the urease nickel metallocenter. This process requires GTP hydrolysis, probably effectuated by UreG. This Rhodopseudomonas palustris (strain BisB18) protein is Urease accessory protein UreG.